The following is a 331-amino-acid chain: Phosphoribosylformylglycinamidine cyclo-ligase (331 aa).

The protein belongs to the AIR synthase family.

Its subcellular location is the cytoplasm. It catalyses the reaction 2-formamido-N(1)-(5-O-phospho-beta-D-ribosyl)acetamidine + ATP = 5-amino-1-(5-phospho-beta-D-ribosyl)imidazole + ADP + phosphate + H(+). Its pathway is purine metabolism; IMP biosynthesis via de novo pathway; 5-amino-1-(5-phospho-D-ribosyl)imidazole from N(2)-formyl-N(1)-(5-phospho-D-ribosyl)glycinamide: step 2/2. This chain is Phosphoribosylformylglycinamidine cyclo-ligase, found in Clostridium botulinum (strain Langeland / NCTC 10281 / Type F).